The sequence spans 124 residues: Ribosome-binding factor A (124 aa).

It belongs to the RbfA family. Monomer. Binds 30S ribosomal subunits, but not 50S ribosomal subunits or 70S ribosomes.

It is found in the cytoplasm. Functionally, one of several proteins that assist in the late maturation steps of the functional core of the 30S ribosomal subunit. Associates with free 30S ribosomal subunits (but not with 30S subunits that are part of 70S ribosomes or polysomes). Required for efficient processing of 16S rRNA. May interact with the 5'-terminal helix region of 16S rRNA. This chain is Ribosome-binding factor A, found in Buchnera aphidicola subsp. Schizaphis graminum (strain Sg).